The sequence spans 101 residues: Urease subunit beta (101 aa).

It belongs to the urease beta subunit family. Heterotrimer of UreA (gamma), UreB (beta) and UreC (alpha) subunits. Three heterotrimers associate to form the active enzyme.

It is found in the cytoplasm. It catalyses the reaction urea + 2 H2O + H(+) = hydrogencarbonate + 2 NH4(+). Its pathway is nitrogen metabolism; urea degradation; CO(2) and NH(3) from urea (urease route): step 1/1. The sequence is that of Urease subunit beta from Pseudomonas fluorescens (strain ATCC BAA-477 / NRRL B-23932 / Pf-5).